Reading from the N-terminus, the 494-residue chain is BTB/POZ domain and ankyrin repeat-containing protein NH5.2 (494 aa).

The 107-residue stretch at 25–131 (SDVAFSVEGR…LYSGQASVAA (107 aa)) folds into the BTB domain. Positions 60–95 (NHQPPPPPPPPLNWPTAGGGGGGSGGGGRGGAGGGG) are disordered. Positions 61–72 (HQPPPPPPPPLN) are enriched in pro residues. Gly residues predominate over residues 76–95 (AGGGGGGSGGGGRGGAGGGG). A C2HC NPR-type zinc finger spans residues 137-151 (LPGCGARGCWHTRCG). C140, C145, H147, and C150 together coordinate Zn(2+). 4 ANK repeats span residues 275–303 (NKIR…GLDL), 304–334 (DDAL…DVNS), 339–368 (TGKT…DPNS), and 372–406 (DGVT…KLRL). 2 disordered regions span residues 421-443 (DDGA…PRSD) and 471-494 (GEGR…NGFA).

It belongs to the plant 'ANKYRIN-BTB/POZ' family. 'NOOT-BOP-COCH-like' (NBCL) subfamily. As to quaternary structure, homodimer. Interacts with TGAL5, TGAL7, TGAL8 and TGAL9.

The protein localises to the nucleus. The protein resides in the cytoplasm. Its pathway is protein modification; protein ubiquitination. Its function is as follows. May act as a substrate-specific adapter of an E3 ubiquitin-protein ligase complex (CUL3-RBX1-BTB) which mediates the ubiquitination and subsequent proteasomal degradation of target proteins. Transcriptional co-regulator involved in the promotion of leaf and floral meristem fate and determinacy. Required for the abscission of senescent organs, probably by regulating the cell wall disorganization in abscission zones (AZs, e.g. pulvini at the base of leaves). The sequence is that of BTB/POZ domain and ankyrin repeat-containing protein NH5.2 from Oryza sativa subsp. japonica (Rice).